The sequence spans 998 residues: DNA damage-induced apoptosis suppressor protein (998 aa).

Residues 815–834 form a disordered region; sequence DKQQASPSCPKNIKTPSQKI. The segment covering 817–834 has biased composition (polar residues); that stretch reads QQASPSCPKNIKTPSQKI.

In terms of tissue distribution, highly expressed in colorectal and lung cancer tissues.

The protein resides in the cytoplasm. Its subcellular location is the nucleus. May be an anti-apoptotic protein involved in DNA repair or cell survival. In Homo sapiens (Human), this protein is DNA damage-induced apoptosis suppressor protein (DDIAS).